The primary structure comprises 155 residues: Putative pre-16S rRNA nuclease (155 aa).

Belongs to the YqgF nuclease family.

It localises to the cytoplasm. Could be a nuclease involved in processing of the 5'-end of pre-16S rRNA. In Xylella fastidiosa (strain M23), this protein is Putative pre-16S rRNA nuclease.